The following is a 276-amino-acid chain: Sulfur carrier protein FdhD (276 aa).

Cys122 (cysteine persulfide intermediate) is an active-site residue. Mo-bis(molybdopterin guanine dinucleotide) is bound at residue 259–264 (FCRRGR).

It belongs to the FdhD family.

The protein localises to the cytoplasm. Functionally, required for formate dehydrogenase (FDH) activity. Acts as a sulfur carrier protein that transfers sulfur from IscS to the molybdenum cofactor prior to its insertion into FDH. This Proteus mirabilis (strain HI4320) protein is Sulfur carrier protein FdhD.